The chain runs to 145 residues: Putative pre-16S rRNA nuclease (145 aa).

Belongs to the YqgF nuclease family.

It localises to the cytoplasm. Functionally, could be a nuclease involved in processing of the 5'-end of pre-16S rRNA. This Opitutus terrae (strain DSM 11246 / JCM 15787 / PB90-1) protein is Putative pre-16S rRNA nuclease.